Consider the following 105-residue polypeptide: Heat shock protein HspQ (105 aa).

The segment at 77 to 105 is disordered; it reads MRDEHPEQPSMDELARTIRKQLQAPRLRN.

It belongs to the HspQ family.

The protein resides in the cytoplasm. In terms of biological role, involved in the degradation of certain denaturated proteins, including DnaA, during heat shock stress. The sequence is that of Heat shock protein HspQ from Salmonella arizonae (strain ATCC BAA-731 / CDC346-86 / RSK2980).